Consider the following 367-residue polypeptide: Tetraprenyl-beta-curcumene synthase (367 aa).

Belongs to the large terpene synthase family.

It catalyses the reaction all-trans-heptaprenyl diphosphate = (R)-tetraprenyl-beta-curcumene + diphosphate. In terms of biological role, catalyzes the transformation of a linear C35 prenyl diphosphate chain to form tetraprenyl-beta-curcumene. The sequence is that of Tetraprenyl-beta-curcumene synthase (ytpB) from Bacillus subtilis (strain 168).